We begin with the raw amino-acid sequence, 147 residues long: MRTTYMAKPGEIDRKWYVVDATDVPLGRLSTVVASILRGKNKPTFTPNVDTGDNVIVINASKVALTGKKAERKIYYHHTAYAGGLKERTAGDFLAKEPTKLIETSVKGMLPHNSLGHKMGLKLHVYAGAEHTQQAQKPEVLDITNLI.

Belongs to the universal ribosomal protein uL13 family. Part of the 50S ribosomal subunit.

This protein is one of the early assembly proteins of the 50S ribosomal subunit, although it is not seen to bind rRNA by itself. It is important during the early stages of 50S assembly. The chain is Large ribosomal subunit protein uL13 from Lactiplantibacillus plantarum (strain ATCC BAA-793 / NCIMB 8826 / WCFS1) (Lactobacillus plantarum).